The sequence spans 335 residues: Ketol-acid reductoisomerase (NADP(+)) 2 (335 aa).

A KARI N-terminal Rossmann domain is found at 1-180 (MKTYYEQDAN…GCTRAGVIET (180 aa)). Residues 24–27 (YGSQ), Arg47, Ser51, and 81–84 (DEQQ) contribute to the NADP(+) site. The active site involves His106. Gly132 provides a ligand contact to NADP(+). The KARI C-terminal knotted domain occupies 181–326 (TFQEETETDL…EELREMMSWI (146 aa)). Positions 189, 193, 225, and 229 each coordinate Mg(2+). Substrate is bound at residue Ser250.

It belongs to the ketol-acid reductoisomerase family. Mg(2+) serves as cofactor.

The enzyme catalyses (2R)-2,3-dihydroxy-3-methylbutanoate + NADP(+) = (2S)-2-acetolactate + NADPH + H(+). It catalyses the reaction (2R,3R)-2,3-dihydroxy-3-methylpentanoate + NADP(+) = (S)-2-ethyl-2-hydroxy-3-oxobutanoate + NADPH + H(+). It functions in the pathway amino-acid biosynthesis; L-isoleucine biosynthesis; L-isoleucine from 2-oxobutanoate: step 2/4. The protein operates within amino-acid biosynthesis; L-valine biosynthesis; L-valine from pyruvate: step 2/4. Its function is as follows. Involved in the biosynthesis of branched-chain amino acids (BCAA). Catalyzes an alkyl-migration followed by a ketol-acid reduction of (S)-2-acetolactate (S2AL) to yield (R)-2,3-dihydroxy-isovalerate. In the isomerase reaction, S2AL is rearranged via a Mg-dependent methyl migration to produce 3-hydroxy-3-methyl-2-ketobutyrate (HMKB). In the reductase reaction, this 2-ketoacid undergoes a metal-dependent reduction by NADPH to yield (R)-2,3-dihydroxy-isovalerate. This Bacillus anthracis protein is Ketol-acid reductoisomerase (NADP(+)) 2.